The primary structure comprises 125 residues: MIYDFKAEIIKAKNSSFSKSGSHHWLLQRVTGVILALCSFWLIYFMFTNKNNDINIIMWEFKKPFNIVILLITVTISLYHSVLGMRVVIEDYINCHKLRNTLIIIVKLFCILTIVSFVVAIFYSG.

The Cytoplasmic segment spans residues 1–24; that stretch reads MIYDFKAEIIKAKNSSFSKSGSHH. A helical transmembrane segment spans residues 25–45; it reads WLLQRVTGVILALCSFWLIYF. Topologically, residues 46–67 are periplasmic; it reads MFTNKNNDINIIMWEFKKPFNI. A helical membrane pass occupies residues 68–89; sequence VILLITVTISLYHSVLGMRVVI. His-80 lines the heme pocket. Topologically, residues 90 to 99 are cytoplasmic; the sequence is EDYINCHKLR. Tyr-92 serves as a coordination point for a ubiquinone. A helical transmembrane segment spans residues 100-123; that stretch reads NTLIIIVKLFCILTIVSFVVAIFY.

Part of an enzyme complex containing four subunits: a flavoprotein, an iron-sulfur protein, plus two membrane-anchoring proteins, SdhC and SdhD. The cofactor is heme.

The protein resides in the cell inner membrane. The protein operates within carbohydrate metabolism; tricarboxylic acid cycle. Functionally, membrane-anchoring subunit of succinate dehydrogenase (SDH). This Rickettsia prowazekii (strain Madrid E) protein is Succinate dehydrogenase hydrophobic membrane anchor subunit (sdhD).